The chain runs to 360 residues: Protein Wnt-2 (360 aa).

The signal sequence occupies residues 1 to 25 (MNACLVGIWLWLPLLFTWLSPEVSS). 11 disulfides stabilise this stretch: C76–C87, C127–C135, C137–C157, C206–C220, C208–C215, C278–C309, C294–C304, C308–C348, C324–C339, C326–C336, and C331–C332. S212 is lipidated: O-palmitoleoyl serine; by PORCN. N-linked (GlcNAc...) asparagine glycosylation occurs at N295.

Belongs to the Wnt family. Post-translationally, palmitoleoylation is required for efficient binding to frizzled receptors. Depalmitoleoylation leads to Wnt signaling pathway inhibition.

The protein localises to the secreted. Its subcellular location is the extracellular space. It localises to the extracellular matrix. In terms of biological role, ligand for members of the frizzled family of seven transmembrane receptors. Probable developmental protein. May be a signaling molecule which affects the development of discrete regions of tissues. Is likely to signal over only few cell diameters. This Muntiacus muntjak (Barking deer) protein is Protein Wnt-2 (WNT2).